The following is a 190-amino-acid chain: Small ribosomal subunit protein uS7 (190 aa).

N-acetylthreonine is present on Thr2.

The protein belongs to the universal ribosomal protein uS7 family. As to quaternary structure, component of the small ribosomal subunit. Part of the small subunit (SSU) processome, composed of more than 70 proteins and the RNA chaperone small nucleolar RNA (snoRNA) U3.

Its subcellular location is the cytoplasm. It is found in the nucleus. The protein resides in the nucleolus. Functionally, component of the small ribosomal subunit. The ribosome is a large ribonucleoprotein complex responsible for the synthesis of proteins in the cell. Part of the small subunit (SSU) processome, first precursor of the small eukaryotic ribosomal subunit. During the assembly of the SSU processome in the nucleolus, many ribosome biogenesis factors, an RNA chaperone and ribosomal proteins associate with the nascent pre-rRNA and work in concert to generate RNA folding, modifications, rearrangements and cleavage as well as targeted degradation of pre-ribosomal RNA by the RNA exosome. The protein is Small ribosomal subunit protein uS7 (rps5) of Dictyostelium discoideum (Social amoeba).